Consider the following 495-residue polypeptide: MSGIHDFTLASARDALKARKISAVELTNAHIDAIERLDGQLNSFITRTPDQAREAAKASDEALAKGEGGSLCGIPLGIKDLFCTNGVRTTAASKILGNFVPPYESTVTANLLKDGAVFLGKLNLDEFAMGSANLTSAFGPVENPWKRKDSDAKLVPGGSSGGSAAAVAAGLVLGATGTDTGGSIRQPAAFTGIAGIKPTYGRCSRFGTIAFASSLDQAGPMARNLQDCAILLESMAGFDPRDSTSVDTPVPHYEAALKRGVKGLRVGIPKEYHVEGMPAEIEALWQQGMTWLRDVGAEIVEVSLPHTKYGLPTYYIAALAEASSNLARYDGVRFGERVSASTLDGLYEASRAAGFGDEVKRRILIGTHVLSSGYYDAYYLRAQKVRTLIQQDFLKAFENVDVLLTPTAPSGAFAQDEKPTDPVQMYLNDVFTVPASMAGVPALSVPAGLDARGVPLGLQLIGKFFDEETLIAAGHAIEQAAAFHHRPTIHAGVSA.

Residues Lys-79 and Ser-159 each act as charge relay system in the active site. Ser-183 functions as the Acyl-ester intermediate in the catalytic mechanism.

It belongs to the amidase family. GatA subfamily. In terms of assembly, heterotrimer of A, B and C subunits.

It carries out the reaction L-glutamyl-tRNA(Gln) + L-glutamine + ATP + H2O = L-glutaminyl-tRNA(Gln) + L-glutamate + ADP + phosphate + H(+). Its function is as follows. Allows the formation of correctly charged Gln-tRNA(Gln) through the transamidation of misacylated Glu-tRNA(Gln) in organisms which lack glutaminyl-tRNA synthetase. The reaction takes place in the presence of glutamine and ATP through an activated gamma-phospho-Glu-tRNA(Gln). The protein is Glutamyl-tRNA(Gln) amidotransferase subunit A of Gluconobacter oxydans (strain 621H) (Gluconobacter suboxydans).